Here is a 294-residue protein sequence, read N- to C-terminus: Glutamate-binding protein GluB (294 aa).

A signal peptide spans 1-26; that stretch reads MSHKRMFTRLAAATSAAVLAGITLTA. The N-palmitoyl cysteine moiety is linked to residue Cys27. Cys27 carries the S-diacylglycerol cysteine lipid modification.

The protein belongs to the bacterial solute-binding protein 3 family. As to quaternary structure, the complex is composed of two ATP-binding proteins (GluA), two transmembrane proteins (GluC and GluD) and a solute-binding protein (GluB).

It localises to the cell membrane. Its function is as follows. Part of the ABC transporter complex GluABCD involved in glutamate uptake. Binds glutamate with a high affinity. The sequence is that of Glutamate-binding protein GluB from Corynebacterium efficiens (strain DSM 44549 / YS-314 / AJ 12310 / JCM 11189 / NBRC 100395).